Here is a 441-residue protein sequence, read N- to C-terminus: Monodehydroascorbate reductase 3 (441 aa).

Residues 14 to 17 (GGVA), Glu-41, Arg-48, Lys-53, Ile-96, and 147 to 148 (RE) contribute to the FAD site. NAD(+) is bound by residues 173 to 179 (GGFLGLE), Glu-197, Arg-203, and Gly-262. Residue 175-179 (FLGLE) coordinates NADP(+). Positions 203 and 262 each coordinate NADP(+). Asp-299 provides a ligand contact to FAD. An NAD(+)-binding site is contributed by 315 to 316 (EH). 315 to 316 (EH) is an NADP(+) binding site. Residue Arg-321 participates in L-ascorbate binding. Tyr-350 serves as a coordination point for FAD. NAD(+) is bound at residue Tyr-350. An NADP(+)-binding site is contributed by Tyr-350. Arg-352 lines the L-ascorbate pocket. Ser-418 carries the phosphoserine modification.

This sequence belongs to the FAD-dependent oxidoreductase family. FAD serves as cofactor.

Its subcellular location is the cytoplasm. The enzyme catalyses 2 monodehydro-L-ascorbate radical + NADH + H(+) = 2 L-ascorbate + NAD(+). Functionally, catalyzes the conversion of monodehydroascorbate to ascorbate, oxidizing NADH in the process. Required for producing sufficient ascorbate to maintain the interaction between Piriformospora indica and Arabidopsis in a mutualistic state. In Arabidopsis thaliana (Mouse-ear cress), this protein is Monodehydroascorbate reductase 3.